Here is a 261-residue protein sequence, read N- to C-terminus: 3-methyl-2-oxobutanoate hydroxymethyltransferase (261 aa).

Mg(2+) is bound by residues D42 and D81. 3-methyl-2-oxobutanoate is bound by residues 42–43 (DS), D81, and K110. Residue E112 participates in Mg(2+) binding. The Proton acceptor role is filled by E179.

This sequence belongs to the PanB family. Homodecamer; pentamer of dimers. Mg(2+) is required as a cofactor.

The protein localises to the cytoplasm. The catalysed reaction is 3-methyl-2-oxobutanoate + (6R)-5,10-methylene-5,6,7,8-tetrahydrofolate + H2O = 2-dehydropantoate + (6S)-5,6,7,8-tetrahydrofolate. It functions in the pathway cofactor biosynthesis; coenzyme A biosynthesis. Functionally, catalyzes the reversible reaction in which hydroxymethyl group from 5,10-methylenetetrahydrofolate is transferred onto alpha-ketoisovalerate to form ketopantoate. The sequence is that of 3-methyl-2-oxobutanoate hydroxymethyltransferase from Pyrobaculum neutrophilum (strain DSM 2338 / JCM 9278 / NBRC 100436 / V24Sta) (Thermoproteus neutrophilus).